The following is a 485-amino-acid chain: Cobyric acid synthase (485 aa).

Residues 250–436 (RRIVACPILP…IHGLLASPAL (187 aa)) form the GATase cobBQ-type domain. The active-site Nucleophile is the cysteine 332. The active site involves histidine 428.

This sequence belongs to the CobB/CobQ family. CobQ subfamily.

It functions in the pathway cofactor biosynthesis; adenosylcobalamin biosynthesis. Its function is as follows. Catalyzes amidations at positions B, D, E, and G on adenosylcobyrinic A,C-diamide. NH(2) groups are provided by glutamine, and one molecule of ATP is hydrogenolyzed for each amidation. This Sphingopyxis alaskensis (strain DSM 13593 / LMG 18877 / RB2256) (Sphingomonas alaskensis) protein is Cobyric acid synthase.